We begin with the raw amino-acid sequence, 360 residues long: Phenylalanine--tRNA ligase alpha subunit (360 aa).

Glu260 is a binding site for Mg(2+).

Belongs to the class-II aminoacyl-tRNA synthetase family. Phe-tRNA synthetase alpha subunit type 1 subfamily. As to quaternary structure, tetramer of two alpha and two beta subunits. Mg(2+) serves as cofactor.

The protein resides in the cytoplasm. It carries out the reaction tRNA(Phe) + L-phenylalanine + ATP = L-phenylalanyl-tRNA(Phe) + AMP + diphosphate + H(+). The protein is Phenylalanine--tRNA ligase alpha subunit of Rhodopseudomonas palustris (strain BisB5).